Reading from the N-terminus, the 152-residue chain is Transcriptional repressor NrdR (152 aa).

A zinc finger lies at 3-34; it reads CAFCGNPDTQVIDSRVSEDGSSIRRRRRCPAC. Residues 49 to 139 enclose the ATP-cone domain; it reads PQVVKTAGHR…VYRSFQDISE (91 aa).

It belongs to the NrdR family. It depends on Zn(2+) as a cofactor.

Functionally, negatively regulates transcription of bacterial ribonucleotide reductase nrd genes and operons by binding to NrdR-boxes. The protein is Transcriptional repressor NrdR of Chromobacterium violaceum (strain ATCC 12472 / DSM 30191 / JCM 1249 / CCUG 213 / NBRC 12614 / NCIMB 9131 / NCTC 9757 / MK).